Reading from the N-terminus, the 447-residue chain is GTPase Der (447 aa).

2 EngA-type G domains span residues 3-167 (PVVA…NLPD) and 181-354 (IKLA…KSAT). Residues 9-16 (GRPNVGKS), 56-60 (DTGGF), 119-122 (NKAE), 187-194 (GRPNVGKS), 234-238 (DTAGL), and 299-302 (NKWD) contribute to the GTP site. The KH-like domain occupies 355–439 (RKMSTPVLTR…PLRIQFKSSQ (85 aa)).

The protein belongs to the TRAFAC class TrmE-Era-EngA-EngB-Septin-like GTPase superfamily. EngA (Der) GTPase family. Associates with the 50S ribosomal subunit.

Functionally, GTPase that plays an essential role in the late steps of ribosome biogenesis. The polypeptide is GTPase Der (Variovorax paradoxus (strain S110)).